The chain runs to 286 residues: Neuferricin homolog (286 aa).

The first 23 residues, M1 to G23, serve as a signal peptide directing secretion. The Cytochrome b5 heme-binding domain maps to A61–N145. Positions H176–P200 form a coiled coil.

Belongs to the cytochrome b5 family. MAPR subfamily.

It is found in the secreted. Functionally, heme-binding protein. This Drosophila pseudoobscura pseudoobscura (Fruit fly) protein is Neuferricin homolog.